The primary structure comprises 399 residues: Formate-dependent phosphoribosylglycinamide formyltransferase (399 aa).

Residues 22-23 (EL) and Glu-82 each bind N(1)-(5-phospho-beta-D-ribosyl)glycinamide. ATP is bound by residues Arg-114, Lys-155, 160 to 165 (SSGKGQ), 195 to 198 (EKMI), and Glu-203. One can recognise an ATP-grasp domain in the interval 119-308 (RLAAETLHLL…EFALHVRAFL (190 aa)). Positions 267 and 279 each coordinate Mg(2+). Residues Asp-286, Lys-355, and 362-363 (RR) contribute to the N(1)-(5-phospho-beta-D-ribosyl)glycinamide site.

Belongs to the PurK/PurT family. In terms of assembly, homodimer.

The catalysed reaction is N(1)-(5-phospho-beta-D-ribosyl)glycinamide + formate + ATP = N(2)-formyl-N(1)-(5-phospho-beta-D-ribosyl)glycinamide + ADP + phosphate + H(+). It participates in purine metabolism; IMP biosynthesis via de novo pathway; N(2)-formyl-N(1)-(5-phospho-D-ribosyl)glycinamide from N(1)-(5-phospho-D-ribosyl)glycinamide (formate route): step 1/1. Functionally, involved in the de novo purine biosynthesis. Catalyzes the transfer of formate to 5-phospho-ribosyl-glycinamide (GAR), producing 5-phospho-ribosyl-N-formylglycinamide (FGAR). Formate is provided by PurU via hydrolysis of 10-formyl-tetrahydrofolate. In Proteus mirabilis (strain HI4320), this protein is Formate-dependent phosphoribosylglycinamide formyltransferase.